Reading from the N-terminus, the 156-residue chain is Small ribosomal subunit protein uS7 (156 aa).

Belongs to the universal ribosomal protein uS7 family. Part of the 30S ribosomal subunit. Contacts proteins S9 and S11.

One of the primary rRNA binding proteins, it binds directly to 16S rRNA where it nucleates assembly of the head domain of the 30S subunit. Is located at the subunit interface close to the decoding center, probably blocks exit of the E-site tRNA. This chain is Small ribosomal subunit protein uS7, found in Lawsonia intracellularis (strain PHE/MN1-00).